A 311-amino-acid polypeptide reads, in one-letter code: Aspartate carbamoyltransferase catalytic subunit (311 aa).

R58 and T59 together coordinate carbamoyl phosphate. K86 is a binding site for L-aspartate. Carbamoyl phosphate contacts are provided by R108, H136, and Q139. L-aspartate contacts are provided by R169 and R223. Carbamoyl phosphate contacts are provided by G264 and P265.

It belongs to the aspartate/ornithine carbamoyltransferase superfamily. ATCase family. As to quaternary structure, heterododecamer (2C3:3R2) of six catalytic PyrB chains organized as two trimers (C3), and six regulatory PyrI chains organized as three dimers (R2).

The enzyme catalyses carbamoyl phosphate + L-aspartate = N-carbamoyl-L-aspartate + phosphate + H(+). Its pathway is pyrimidine metabolism; UMP biosynthesis via de novo pathway; (S)-dihydroorotate from bicarbonate: step 2/3. In terms of biological role, catalyzes the condensation of carbamoyl phosphate and aspartate to form carbamoyl aspartate and inorganic phosphate, the committed step in the de novo pyrimidine nucleotide biosynthesis pathway. This Pelodictyon phaeoclathratiforme (strain DSM 5477 / BU-1) protein is Aspartate carbamoyltransferase catalytic subunit.